Consider the following 97-residue polypeptide: uncharacterized protein (97 aa).

It belongs to the mycobacterial PE family.

Functionally, part of the ESX-1 / type VII specialized secretion system (T7SS), which exports several proteins including EsxA and EsxB. Plays a role in DNA conjugation, in at least a donor strain. This is an uncharacterized protein from Mycolicibacterium smegmatis (strain ATCC 700084 / mc(2)155) (Mycobacterium smegmatis).